Reading from the N-terminus, the 513-residue chain is ATP synthase subunit alpha 2 (513 aa).

Residue 169–176 (GDRQTGKT) participates in ATP binding.

It belongs to the ATPase alpha/beta chains family. As to quaternary structure, F-type ATPases have 2 components, CF(1) - the catalytic core - and CF(0) - the membrane proton channel. CF(1) has five subunits: alpha(3), beta(3), gamma(1), delta(1), epsilon(1). CF(0) has three main subunits: a(1), b(2) and c(9-12). The alpha and beta chains form an alternating ring which encloses part of the gamma chain. CF(1) is attached to CF(0) by a central stalk formed by the gamma and epsilon chains, while a peripheral stalk is formed by the delta and b chains.

It localises to the cell inner membrane. It carries out the reaction ATP + H2O + 4 H(+)(in) = ADP + phosphate + 5 H(+)(out). Its function is as follows. Produces ATP from ADP in the presence of a proton gradient across the membrane. The alpha chain is a regulatory subunit. In Photobacterium profundum (strain SS9), this protein is ATP synthase subunit alpha 2.